The primary structure comprises 327 residues: Aspartate--ammonia ligase (327 aa).

It belongs to the class-II aminoacyl-tRNA synthetase family. AsnA subfamily.

The protein resides in the cytoplasm. It carries out the reaction L-aspartate + NH4(+) + ATP = L-asparagine + AMP + diphosphate + H(+). It functions in the pathway amino-acid biosynthesis; L-asparagine biosynthesis; L-asparagine from L-aspartate (ammonia route): step 1/1. The protein is Aspartate--ammonia ligase of Mycoplasmoides gallisepticum (strain R(low / passage 15 / clone 2)) (Mycoplasma gallisepticum).